We begin with the raw amino-acid sequence, 534 residues long: Cytokinin dehydrogenase 1 (534 aa).

The N-terminal stretch at 1–18 is a signal peptide; that stretch reads MAVVYYLLLAGLIACSHA. Asn52, Asn63, and Asn89 each carry an N-linked (GlcNAc...) asparagine glycan. Residues 65–245 enclose the FAD-binding PCMH-type domain; the sequence is TSALPAAVLY…TRARIAVEPA (181 aa). Residues Phe100, Gly102, Arg103, and Gly104 each contribute to the FAD site. His105 bears the Pros-8alpha-FAD histidine mark. 2 residues coordinate FAD: Ser106 and Gln110. Asn134 is a glycosylation site (N-linked (GlcNAc...) asparagine). Asp169, Thr174, Ser180, Ile184, and Ile235 together coordinate FAD. Residue Asp169 participates in N(6)-dimethylallyladenine binding. Asp169 is a trans-zeatin binding site. 3 N-linked (GlcNAc...) asparagine glycosylation sites follow: Asn294, Asn323, and Asn338. Residue Glu381 participates in N(6)-dimethylallyladenine binding. Residue Glu381 participates in trans-zeatin binding. Asn434 carries N-linked (GlcNAc...) asparagine glycosylation. Trans-zeatin is bound at residue Ser456. FAD contacts are provided by Tyr491, Ser527, and Gln530.

This sequence belongs to the oxygen-dependent FAD-linked oxidoreductase family. As to quaternary structure, monomer. FAD serves as cofactor. Post-translationally, glycosylated; with approximately 10 hexose residues per site. Expressed in immature kernels and unpollinated cobs. Weakly expressed in kernels harvested two weeks after anthesis.

Its subcellular location is the secreted. It localises to the extracellular space. The catalysed reaction is N(6)-dimethylallyladenine + A + H2O = 3-methyl-2-butenal + adenine + AH2. Competitive inhibition by phenylureas. Catalyzes the oxidation of cytokinins, a family of N(6)-substituted adenine derivatives that are plant hormones, where the substituent is an isopentenyl group. Cleaves trans-zeatin, N(6)-dimethylallyladenine (isopentenyladenine), isopentenyladenosine, zeatin riboside and cis-zeatin, but not dihydrozeatin, kinetin and benzylaminopurine. This Zea mays (Maize) protein is Cytokinin dehydrogenase 1 (CKX1).